The chain runs to 416 residues: Phosphatidylinositol 5-phosphate 4-kinase type-2 beta (416 aa).

The residue at position 2 (serine 2) is an N-acetylserine. Threonine 8 bears the Phosphothreonine mark. The residue at position 19 (serine 19) is a Phosphoserine. One can recognise a PIPK domain in the interval 38–415 (ASEPILSVLM…RFNEFMSNIL (378 aa)). Positions 64–70 (VMLMPDD) are required for interaction with PIP5K1A. An N6-acetyllysine mark is found at lysine 94 and lysine 150. ATP is bound by residues 202–204 (RNV) and lysine 214. GTP is bound by residues 203–204 (NV) and lysine 214. Phosphothreonine is present on threonine 322. Phosphoserine is present on serine 326. A GTP-binding site is contributed by aspartate 369.

In terms of assembly, homodimer. Binds TNFRSF1A. Interacts with PIP4K2A; the interaction suppresses ubiquitination by the SPOP/CUL3 complex. Probably interacts with PIP5K1A; the interaction inhibits PIP5K1A kinase activity. Ubiquitinated by the SPOP/CUL3 complex. Ubiquitination is stimulated by PtdIns5P levels. In terms of processing, phosphorylated on serine residues.

Its subcellular location is the endoplasmic reticulum membrane. It is found in the cell membrane. The protein localises to the nucleus. It localises to the cytoplasm. It carries out the reaction a 1,2-diacyl-sn-glycero-3-phospho-(1D-myo-inositol-5-phosphate) + ATP = a 1,2-diacyl-sn-glycero-3-phospho-(1D-myo-inositol-4,5-bisphosphate) + ADP + H(+). The catalysed reaction is 1,2-dihexadecanoyl-sn-glycero-3-phospho-(1D-myo-inositol-5-phosphate) + ATP = 1,2-dihexadecanoyl-sn-glycero-3-phospho-(1D-myo-inositol-4,5-bisphosphate) + ADP + H(+). It catalyses the reaction 1,2-dihexadecanoyl-sn-glycero-3-phospho-(1D-myo-inositol-5-phosphate) + GTP = 1,2-dihexadecanoyl-sn-glycero-3-phospho-(1D-myo-inositol-4,5-bisphosphate) + GDP + H(+). Functionally, participates in the biosynthesis of phosphatidylinositol 4,5-bisphosphate. Preferentially utilizes GTP, rather than ATP, for PI(5)P phosphorylation and its activity reflects changes in direct proportion to the physiological GTP concentration. Its GTP-sensing activity is critical for metabolic adaptation. PIP4Ks negatively regulate insulin signaling through a catalytic-independent mechanism. They interact with PIP5Ks and suppress PIP5K-mediated PtdIns(4,5)P2 synthesis and insulin-dependent conversion to PtdIns(3,4,5)P3. The polypeptide is Phosphatidylinositol 5-phosphate 4-kinase type-2 beta (Rattus norvegicus (Rat)).